Consider the following 432-residue polypeptide: Adenylosuccinate synthetase (432 aa).

Residues 12–18 and 40–42 contribute to the GTP site; these read GDEGKGK and GHT. D13 functions as the Proton acceptor in the catalytic mechanism. Positions 13 and 40 each coordinate Mg(2+). IMP is bound by residues 13-16, 38-41, T129, R143, Q224, T239, and R303; these read DEGK and NAGH. The active-site Proton donor is the H41. 299–305 serves as a coordination point for substrate; that stretch reads VTTGRRR. GTP-binding positions include R305, 331-333, and 413-415; these read KLD and GVG.

This sequence belongs to the adenylosuccinate synthetase family. As to quaternary structure, homodimer. Mg(2+) is required as a cofactor.

It is found in the cytoplasm. It carries out the reaction IMP + L-aspartate + GTP = N(6)-(1,2-dicarboxyethyl)-AMP + GDP + phosphate + 2 H(+). It participates in purine metabolism; AMP biosynthesis via de novo pathway; AMP from IMP: step 1/2. In terms of biological role, plays an important role in the de novo pathway of purine nucleotide biosynthesis. Catalyzes the first committed step in the biosynthesis of AMP from IMP. This Mycobacterium avium (strain 104) protein is Adenylosuccinate synthetase.